The chain runs to 28 residues: Chassatide C12 (28 aa).

The cyclopeptide (Glu-Asn) cross-link spans 1-28 (EYCGESCYLIPCFTPGCYCVSRQCVNKN). Cystine bridges form between Cys-3-Cys-17, Cys-7-Cys-19, and Cys-12-Cys-24.

This is a cyclic peptide. In terms of tissue distribution, expressed in fruit, pedicel, leaf and stem but not in root (at protein level).

Its function is as follows. Probably participates in a plant defense mechanism. This Chassalia chartacea (Chassalia curviflora) protein is Chassatide C12.